The chain runs to 251 residues: Ribosomal RNA small subunit methyltransferase J (251 aa).

S-adenosyl-L-methionine contacts are provided by residues 100 to 101 (RD), 116 to 117 (ER), and D170.

This sequence belongs to the methyltransferase superfamily. RsmJ family.

The protein resides in the cytoplasm. It catalyses the reaction guanosine(1516) in 16S rRNA + S-adenosyl-L-methionine = N(2)-methylguanosine(1516) in 16S rRNA + S-adenosyl-L-homocysteine + H(+). In terms of biological role, specifically methylates the guanosine in position 1516 of 16S rRNA. This Haemophilus ducreyi (strain 35000HP / ATCC 700724) protein is Ribosomal RNA small subunit methyltransferase J.